The primary structure comprises 405 residues: Eukaryotic initiation factor 4A (405 aa).

The short motif at 31–59 (ECFEALNLEGDLLRGIFAYGFEKPSAIQQ) is the Q motif element. The Helicase ATP-binding domain occupies 62–232 (IKPILDGYDT…TQFMRDPKRI (171 aa)). 75-82 (AQSGTGKT) is an ATP binding site. Positions 180-183 (DEAD) match the DEAD box motif. The Helicase C-terminal domain maps to 243–404 (GIRQFYVGVE…EMPMGITDIL (162 aa)).

This sequence belongs to the DEAD box helicase family. eIF4A subfamily. As to quaternary structure, eIF4F is a multi-subunit complex, the composition of which varies with external and internal environmental conditions. It is composed of at least EIF4A, EIF4E and EIF4G.

The catalysed reaction is ATP + H2O = ADP + phosphate + H(+). Functionally, ATP-dependent RNA helicase which is a subunit of the eIF4F complex involved in cap recognition and is required for mRNA binding to ribosome. In the current model of translation initiation, eIF4A unwinds RNA secondary structures in the 5'-UTR of mRNAs which is necessary to allow efficient binding of the small ribosomal subunit, and subsequent scanning for the initiator codon. This is Eukaryotic initiation factor 4A (EIF4-A) from Cryptosporidium parvum.